The sequence spans 433 residues: 4-hydroxy-3-methylbut-2-en-1-yl diphosphate synthase (flavodoxin) (433 aa).

Residues 1 to 13 (MNKPETVTENSLA) are compositionally biased toward polar residues. Positions 1–23 (MNKPETVTENSLASDVAGPAPRH) are disordered. C314, C317, C360, and E367 together coordinate [4Fe-4S] cluster.

Belongs to the IspG family. [4Fe-4S] cluster is required as a cofactor.

The enzyme catalyses (2E)-4-hydroxy-3-methylbut-2-enyl diphosphate + oxidized [flavodoxin] + H2O + 2 H(+) = 2-C-methyl-D-erythritol 2,4-cyclic diphosphate + reduced [flavodoxin]. It participates in isoprenoid biosynthesis; isopentenyl diphosphate biosynthesis via DXP pathway; isopentenyl diphosphate from 1-deoxy-D-xylulose 5-phosphate: step 5/6. Its function is as follows. Converts 2C-methyl-D-erythritol 2,4-cyclodiphosphate (ME-2,4cPP) into 1-hydroxy-2-methyl-2-(E)-butenyl 4-diphosphate. In Bradyrhizobium sp. (strain ORS 278), this protein is 4-hydroxy-3-methylbut-2-en-1-yl diphosphate synthase (flavodoxin).